Here is a 310-residue protein sequence, read N- to C-terminus: RING-H2 finger protein ATL60 (310 aa).

The helical transmembrane segment at 24-44 (VLLFSIVSIFTGILFLLLLHL) threads the bilayer. Residues 120-162 (CAVCLSDLVDGDKARVLPRCNHGFHVDCIDMWFQSHSTCPLCR) form an RING-type; atypical zinc finger. 2 disordered regions span residues 170-201 (DTTH…QDQS) and 240-260 (GNFA…RSQE). Positions 179–201 (LPQNQNFESGHSTNQHNPSQDQS) are enriched in polar residues.

It belongs to the RING-type zinc finger family. ATL subfamily.

The protein resides in the membrane. The enzyme catalyses S-ubiquitinyl-[E2 ubiquitin-conjugating enzyme]-L-cysteine + [acceptor protein]-L-lysine = [E2 ubiquitin-conjugating enzyme]-L-cysteine + N(6)-ubiquitinyl-[acceptor protein]-L-lysine.. Its pathway is protein modification; protein ubiquitination. The protein is RING-H2 finger protein ATL60 (ATL60) of Arabidopsis thaliana (Mouse-ear cress).